A 344-amino-acid chain; its full sequence is Meiotic expression up-regulated protein 26 (344 aa).

It localises to the nucleus. This Schizosaccharomyces pombe (strain 972 / ATCC 24843) (Fission yeast) protein is Meiotic expression up-regulated protein 26 (meu26).